Consider the following 614-residue polypeptide: Kelch-like protein 40 (614 aa).

The BTB domain occupies 33 to 100 (IDCVLKIQGK…IYTSEIEITE (68 aa)). One can recognise a BACK domain in the interval 135 to 237 (CLAIFRLGLL…PQDYIKNKVE (103 aa)). Kelch repeat units lie at residues 353 to 405 (QLFV…ESEN), 406 to 455 (SIYL…SHDN), 456 to 503 (LVYV…VHKG), 504 to 550 (KIFI…SMNG), and 552 to 606 (LYAI…AARL).

The protein belongs to the KLHL40 family. As to quaternary structure, component of the BCR(KLHL40) E3 ubiquitin ligase complex.

Its subcellular location is the cytoplasm. It is found in the myofibril. The protein localises to the sarcomere. The protein resides in the a band. It localises to the i band. Substrate-specific adapter of a BCR (BTB-CUL3-RBX1) E3 ubiquitin ligase complex that acts as a key regulator of skeletal muscle development. In Xenopus laevis (African clawed frog), this protein is Kelch-like protein 40 (klhl40).